A 340-amino-acid chain; its full sequence is Alpha-1,4-N-acetylglucosaminyltransferase (340 aa).

Residues 1-4 (MRKE) are Cytoplasmic-facing. A helical; Signal-anchor for type II membrane protein transmembrane segment spans residues 5–25 (LQLSLSVTLLLVCGFLYQFTL). The Lumenal portion of the chain corresponds to 26–340 (KSSCLFCLPS…VTGELGPGNK (315 aa)). Residues asparagine 99 and asparagine 138 are each glycosylated (N-linked (GlcNAc...) asparagine). The DXD motif signature appears at 167-169 (DTD). Residues asparagine 251 and asparagine 282 are each glycosylated (N-linked (GlcNAc...) asparagine).

The protein belongs to the glycosyltransferase 32 family. In terms of tissue distribution, detected in stomach and pancreas.

The protein localises to the golgi apparatus membrane. It participates in protein modification; protein glycosylation. In terms of biological role, catalyzes the transfer of N-acetylglucosamine (GlcNAc) to core 2 branched O-glycans. Necessary for the synthesis of type III mucin which is specifically produced in the stomach, duodenum, and pancreatic duct. May protect against inflammation-associated gastric adenocarcinomas. This is Alpha-1,4-N-acetylglucosaminyltransferase (A4GNT) from Homo sapiens (Human).